The sequence spans 519 residues: NADH-quinone oxidoreductase subunit N (519 aa).

Transmembrane regions (helical) follow at residues 22–42 (LLPMLIVFGVACAGVLVEAFV), 53–73 (VLALGGLVAALIAVVSNTGLP), 87–107 (PTLFIQGTILALSIGALLLIA), 141–161 (TEVFPLAMFAVGGMMLFPAAN), 163–183 (LITAFVALEVLSLPLYLLAGM), 198–218 (YFLLGAFSSAFFVYGLALVYG), 242–262 (IIVGLALIGISLLFKLSGVPF), 287–307 (VAAFGALLRVFFVAFGGLAWD), 310–330 (PVIWGVAIATMVVGAILGITQ), 336–356 (LLAYSSIAHAGFVLTAFAATT), 363–383 (VLFYLVAYGFMTIGAFAIVIL), 406–426 (LVAGIFALFLLAMAGLPPTSG), 442–461 (AGPLVIVGVLASAVTAYYYL), and 483–503 (GALASAAIALGVIVTVVLGIV).

The protein belongs to the complex I subunit 2 family. NDH-1 is composed of 14 different subunits. Subunits NuoA, H, J, K, L, M, N constitute the membrane sector of the complex.

The protein localises to the cell membrane. The catalysed reaction is a quinone + NADH + 5 H(+)(in) = a quinol + NAD(+) + 4 H(+)(out). Its function is as follows. NDH-1 shuttles electrons from NADH, via FMN and iron-sulfur (Fe-S) centers, to quinones in the respiratory chain. The immediate electron acceptor for the enzyme in this species is believed to be a menaquinone. Couples the redox reaction to proton translocation (for every two electrons transferred, four hydrogen ions are translocated across the cytoplasmic membrane), and thus conserves the redox energy in a proton gradient. This is NADH-quinone oxidoreductase subunit N from Acidothermus cellulolyticus (strain ATCC 43068 / DSM 8971 / 11B).